Here is a 111-residue protein sequence, read N- to C-terminus: Large ribosomal subunit protein uL24 (111 aa).

The protein belongs to the universal ribosomal protein uL24 family. In terms of assembly, part of the 50S ribosomal subunit.

Its function is as follows. One of two assembly initiator proteins, it binds directly to the 5'-end of the 23S rRNA, where it nucleates assembly of the 50S subunit. In terms of biological role, one of the proteins that surrounds the polypeptide exit tunnel on the outside of the subunit. This chain is Large ribosomal subunit protein uL24, found in Cytophaga hutchinsonii (strain ATCC 33406 / DSM 1761 / CIP 103989 / NBRC 15051 / NCIMB 9469 / D465).